A 377-amino-acid chain; its full sequence is tRNA pseudouridine synthase B (377 aa).

Asp53 (nucleophile) is an active-site residue.

Belongs to the pseudouridine synthase TruB family. Type 1 subfamily.

The catalysed reaction is uridine(55) in tRNA = pseudouridine(55) in tRNA. Responsible for synthesis of pseudouridine from uracil-55 in the psi GC loop of transfer RNAs. The chain is tRNA pseudouridine synthase B from Tropheryma whipplei (strain Twist) (Whipple's bacillus).